Consider the following 447-residue polypeptide: Argininosuccinate lyase (447 aa).

This sequence belongs to the lyase 1 family. Argininosuccinate lyase subfamily.

The protein resides in the cytoplasm. It catalyses the reaction 2-(N(omega)-L-arginino)succinate = fumarate + L-arginine. Its pathway is amino-acid biosynthesis; L-arginine biosynthesis; L-arginine from L-ornithine and carbamoyl phosphate: step 3/3. The polypeptide is Argininosuccinate lyase (Bacteroides fragilis (strain YCH46)).